A 390-amino-acid chain; its full sequence is Protein YghO (390 aa).

The chain is Protein YghO (yghO) from Escherichia coli (strain K12).